Reading from the N-terminus, the 289-residue chain is ATP synthase gamma chain (289 aa).

The protein belongs to the ATPase gamma chain family. In terms of assembly, F-type ATPases have 2 components, CF(1) - the catalytic core - and CF(0) - the membrane proton channel. CF(1) has five subunits: alpha(3), beta(3), gamma(1), delta(1), epsilon(1). CF(0) has three main subunits: a, b and c.

It localises to the cell inner membrane. Its function is as follows. Produces ATP from ADP in the presence of a proton gradient across the membrane. The gamma chain is believed to be important in regulating ATPase activity and the flow of protons through the CF(0) complex. The chain is ATP synthase gamma chain from Histophilus somni (strain 129Pt) (Haemophilus somnus).